The following is a 347-amino-acid chain: tRNA N6-adenosine threonylcarbamoyltransferase (347 aa).

Fe cation contacts are provided by His-111 and His-115. Substrate-binding positions include 133-137, Asp-166, Gly-179, and Asn-278; that span reads LASGG. Residue Asp-306 participates in Fe cation binding.

The protein belongs to the KAE1 / TsaD family. Requires Fe(2+) as cofactor.

It is found in the cytoplasm. The enzyme catalyses L-threonylcarbamoyladenylate + adenosine(37) in tRNA = N(6)-L-threonylcarbamoyladenosine(37) in tRNA + AMP + H(+). In terms of biological role, required for the formation of a threonylcarbamoyl group on adenosine at position 37 (t(6)A37) in tRNAs that read codons beginning with adenine. Is involved in the transfer of the threonylcarbamoyl moiety of threonylcarbamoyl-AMP (TC-AMP) to the N6 group of A37, together with TsaE and TsaB. TsaD likely plays a direct catalytic role in this reaction. The protein is tRNA N6-adenosine threonylcarbamoyltransferase of Paramagnetospirillum magneticum (strain ATCC 700264 / AMB-1) (Magnetospirillum magneticum).